A 309-amino-acid chain; its full sequence is Ecto-ADP-ribosyltransferase 5 (309 aa).

The N-terminal stretch at 1 to 23 (MILEDLLMVLSCLSLHALWKVRA) is a signal peptide. C43 and C259 are disulfide-bonded. A TR mART core domain is found at 63–253 (ALLRESWEAA…IVTLWSYDQT (191 aa)). Residue Y100 participates in NAD(+) binding. N-linked (GlcNAc...) asparagine glycosylation occurs at N102. NAD(+) contacts are provided by R161 and Q181. R161 is an active-site residue. S184 is an active-site residue. N197 is a glycosylation site (N-linked (GlcNAc...) asparagine). Residue S215 coordinates NAD(+). The active site involves E222.

This sequence belongs to the Arg-specific ADP-ribosyltransferase family. Abundantly expressed in testis. Lower levels in cardiac and skeletal muscle.

It is found in the secreted. The protein resides in the membrane. It catalyses the reaction L-arginyl-[protein] + NAD(+) = N(omega)-(ADP-D-ribosyl)-L-arginyl-[protein] + nicotinamide + H(+). The protein is Ecto-ADP-ribosyltransferase 5 (Art5) of Mus musculus (Mouse).